The primary structure comprises 1367 residues: Flocculation protein FLO11 (1367 aa).

Positions 1-21 (MQRPFLLAYLVLSLLFNSALG) are cleaved as a signal peptide. The 177-residue stretch at 31-207 (SSEGTSCNSI…NIDCDNNCGG (177 aa)) folds into the Flo11 domain. 3 disulfide bridges follow: Cys37/Cys201, Cys44/Cys179, and Cys141/Cys205. A compositionally biased stretch (low complexity) spans 209–267 (KSSTTTSSTSESSTTTSSTSESSTTTSSTSESSTTTSSTSESSTSSSTTAPATPTTTSC). Disordered regions lie at residues 209-975 (KSST…TTSV) and 1008-1032 (TTTVPCSTSPSETASESTTTSPTTP). A run of 45 repeats spans residues 210-219 (SSTTTSSTSE), 220-229 (SSTTTSSTSE), 230-239 (SSTTTSSTSE), 240-249 (SSTTTSSTSE), 262-274 (PTTTSCTKEKPTP), 275-287 (PTTTSCTKEKPTP), 313-327 (PVPTPSSSTTESSSA), 328-342 (PVPTPSSSTTESSSA), 343-354 (PVTSSTTESSSA), 355-369 (PVPTPSSSTTESSSA), 370-381 (PVTSSTTESSSA), 382-393 (PVTSSTTESSSA), 394-408 (PVPTPSSSTTESSSA), 409-420 (PVTSSTTESSSA), 421-432 (PVTSSTTESSSA), 433-444 (PVTSSTTESSSA), 445-456 (PVTSSTTESSSA), 457-471 (PVPTPSSSTTESSSA), 472-483 (PVTSSTTESSSA), 484-498 (PVPTPSSSTTESSSA), 499-510 (PVTSSTTESSSA), 511-525 (PVPTPSSSTTESSSA), 526-540 (PAPTPSSSTTESSSA), 541-552 (PVTSSTTESSSA), 568-579 (PVTSSTTESSSA), 580-594 (PVPTPSSSTTESSSA), 595-609 (PVPTPSSSTTESSSA), 610-624 (PAPTPSSSTTESSSA), 625-636 (PVTSSTTESSSA), 637-651 (PVPTPSSSTTESSSA), 652-666 (PVPTPSSSTTESSSA), 667-681 (PVPTPSSSTTESSSA), 682-693 (PVTSSTTESSSA), 694-705 (PVTSSTTESSSA), 706-720 (PVPTPSSSTTESSSA), 721-735 (PVPTPSSSTTESSSA), 736-750 (PVPTPSSSTTESSSA), 751-762 (PVTSSTTESSSA), 763-777 (PVPTPSSSTTESSSA), 778-792 (PVPTPSSSTTESSSA), 808-822 (PVPTPSSSSNITSSA), 838-852 (PVPTPSSSTTESSSA), 865-879 (PVPTPSSSSNITSSA), 937-968 (TTITTTVCSTGTNSAGETTSGCSPKTVTTTVP), and 981-1012 (TTITTTVCSTGTNSAGETTSGCSPKTITTTVP). Residues 210–249 (SSTTTSSTSESSTTTSSTSESSTTTSSTSESSTTTSSTSE) are 4 X 10 AA repeats, Ser/Thr-rich. A 2 X 13 AA repeats, Thr-rich region spans residues 262–287 (PTTTSCTKEKPTPPTTTSCTKEKPTP). The segment covering 281–292 (TKEKPTPPHHDT) has biased composition (basic and acidic residues). 2 stretches are compositionally biased toward low complexity: residues 302–900 (TSKT…TVTP) and 910–948 (TETSVSSTTETTIVPTKTTTSVTTPSTTTITTTVCSTGT). A 22 X 15 AA approximate repeats, Ser-rich region spans residues 313–852 (PVPTPSSSTT…SSSTTESSSA (540 aa)). A 15 X 12 AA repeats, Ser/Thr-rich region spans residues 343–762 (PVTSSTTESS…TSSTTESSSA (420 aa)). Asn817 is a glycosylation site (N-linked (GlcNAc...) asparagine). Asn874 carries N-linked (GlcNAc...) asparagine glycosylation. The interval 937-1119 (TTITTTVCST…SPKTVTTTVP (183 aa)) is 3 X 32 AA tandem repeats, Thr-rich. The segment covering 949–961 (NSAGETTSGCSPK) has biased composition (polar residues). Residues 962–975 (TVTTTVPTTTTTSV) show a composition bias toward low complexity. Over residues 1014 to 1032 (STSPSETASESTTTSPTTP) the composition is skewed to low complexity. Residues 1088-1119 (TTITTTVCSTGTNSAGETTSGCSPKTVTTTVP) form a 5-3 repeat. A lipid anchor (GPI-anchor amidated glycine) is attached at Gly1346. Residues 1347–1367 (AANIKVLGNFMWLLLALPVVF) constitute a propeptide, removed in mature form.

Belongs to the flocculin family. Highly divergent. Extensively O-mannosylated. In terms of processing, the GPI-anchor is attached to the protein in the endoplasmic reticulum and serves to target the protein to the cell surface. There, the glucosamine-inositol phospholipid moiety is cleaved off and the GPI-modified mannoprotein is covalently attached via its lipidless GPI glycan remnant to the 1,6-beta-glucan of the outer cell wall layer. Post-translationally, a soluble form is probably produced by proteolytic cleavage at the cell surface (shedding).

It is found in the secreted. The protein localises to the cell wall. Its subcellular location is the membrane. In terms of biological role, homophilic binding protein that enables kin discrimination in heterogeneous yeast populations by mediating homotypic cell-cell interactions during flocculation, a reversible and asexual process in which cells adhere to form aggregates (flocs). Plays a role in cell-substrate adhesion, haploid invasive growth, diploid pseudohyphae formation and biofilm (flor) development. Adhesive activity is inhibited by mannose, but not by glucose, maltose, sucrose or galactose. This Saccharomyces cerevisiae (strain ATCC 204508 / S288c) (Baker's yeast) protein is Flocculation protein FLO11.